The primary structure comprises 509 residues: Steroid 17-alpha-hydroxylase/17,20 lyase (509 aa).

Cys445 serves as a coordination point for heme.

It belongs to the cytochrome P450 family. Heme is required as a cofactor.

Its subcellular location is the membrane. The catalysed reaction is a C21-steroid + reduced [NADPH--hemoprotein reductase] + O2 = a 17alpha-hydroxy-C21-steroid + oxidized [NADPH--hemoprotein reductase] + H2O + H(+). It catalyses the reaction 17alpha-hydroxyprogesterone + reduced [NADPH--hemoprotein reductase] + O2 = androst-4-ene-3,17-dione + acetate + oxidized [NADPH--hemoprotein reductase] + H2O + 2 H(+). The enzyme catalyses 17alpha-hydroxypregnenolone + reduced [NADPH--hemoprotein reductase] + O2 = 3beta-hydroxyandrost-5-en-17-one + acetate + oxidized [NADPH--hemoprotein reductase] + H2O + 2 H(+). The protein operates within lipid metabolism; steroid biosynthesis. In terms of biological role, conversion of pregnenolone and progesterone to their 17-alpha-hydroxylated products and subsequently to dehydroepiandrosterone (DHEA) and androstenedione. Catalyzes both the 17-alpha-hydroxylation and the 17,20-lyase reaction. In Squalus acanthias (Spiny dogfish), this protein is Steroid 17-alpha-hydroxylase/17,20 lyase (CYP17A1).